The chain runs to 302 residues: Deoxyribonuclease-1-like 1 (302 aa).

The N-terminal stretch at 1–18 (MHYPTALLFLILVNGAQA) is a signal peptide. Residues E97 and H148 contribute to the active site. Residues C187 and C224 are joined by a disulfide bond. An N-linked (GlcNAc...) asparagine glycan is attached at N261.

Belongs to the DNase I family.

It is found in the endoplasmic reticulum. This chain is Deoxyribonuclease-1-like 1 (DNASE1L1), found in Chlorocebus aethiops (Green monkey).